A 275-amino-acid polypeptide reads, in one-letter code: Lectin DB58 (275 aa).

The N-terminal stretch at 1-22 (MASSTVSVVLSLFLLLLTQAYS) is a signal peptide. Residues Asn-34 and Asn-101 are each glycosylated (N-linked (GlcNAc...) asparagine).

Belongs to the leguminous lectin family. Heterodimer, composed of an alpha and a beta subunit derived from a single precursor. In terms of processing, leu-264 is missing in a major portion of the beta subunit, suggesting an origin by sequential removal of amino acids rather than a processing by endoproteolytic cleavage.

Its function is as follows. Metalloglycoprotein, containing Ca, Mg, Mn, and Zn and the carbohydrates galactose, glucosamine, mannose, and fucose. It agglutinates erythrocytes of blood group A1. The sequence is that of Lectin DB58 from Vigna unguiculata subsp. cylindrica (Horse gram).